Consider the following 388-residue polypeptide: Na(+)/H(+) antiporter NhaA (388 aa).

Helical transmembrane passes span 8 to 28 (FLKL…IALI), 33 to 53 (PLQG…FAAL), 59 to 79 (LLLW…GLEV), 95 to 115 (LFPV…YLLF), 125 to 145 (GWAI…ALLS), 154 to 174 (VFLL…IALF), 179 to 199 (VSLV…WMNW), 217 to 237 (VCIL…GFLI), 259 to 279 (VAYL…LNGV), 287 to 307 (ILPL…IFLF), 328 to 348 (IFAV…ISGL), and 363 to 383 (LGIL…LRMV).

Belongs to the NhaA Na(+)/H(+) (TC 2.A.33) antiporter family.

The protein localises to the cell inner membrane. It catalyses the reaction Na(+)(in) + 2 H(+)(out) = Na(+)(out) + 2 H(+)(in). Its function is as follows. Na(+)/H(+) antiporter that extrudes sodium in exchange for external protons. This Photorhabdus laumondii subsp. laumondii (strain DSM 15139 / CIP 105565 / TT01) (Photorhabdus luminescens subsp. laumondii) protein is Na(+)/H(+) antiporter NhaA.